Consider the following 91-residue polypeptide: Large ribosomal subunit protein eL43 (91 aa).

The C4-type zinc-finger motif lies at 39–60; it reads CPFCGKDAMRRGAVGIWNCSKC.

Belongs to the eukaryotic ribosomal protein eL43 family.

The polypeptide is Large ribosomal subunit protein eL43 (rpl-37a) (Ostertagia ostertagi (Brown stomach worm)).